The sequence spans 400 residues: Glutamyl-tRNA reductase (400 aa).

Substrate-binding positions include 45-48 (TCNR), serine 103, 108-110 (EDQ), and glutamine 114. Cysteine 46 acts as the Nucleophile in catalysis. 179-184 (GYGEIG) lines the NADP(+) pocket.

Belongs to the glutamyl-tRNA reductase family. In terms of assembly, homodimer.

It catalyses the reaction (S)-4-amino-5-oxopentanoate + tRNA(Glu) + NADP(+) = L-glutamyl-tRNA(Glu) + NADPH + H(+). The protein operates within porphyrin-containing compound metabolism; protoporphyrin-IX biosynthesis; 5-aminolevulinate from L-glutamyl-tRNA(Glu): step 1/2. Functionally, catalyzes the NADPH-dependent reduction of glutamyl-tRNA(Glu) to glutamate 1-semialdehyde (GSA). This Clostridium perfringens (strain 13 / Type A) protein is Glutamyl-tRNA reductase.